The following is a 57-amino-acid chain: Large ribosomal subunit protein bL32c (57 aa).

Belongs to the bacterial ribosomal protein bL32 family.

It is found in the plastid. The protein localises to the chloroplast. This chain is Large ribosomal subunit protein bL32c, found in Acorus calamus (Sweet flag).